We begin with the raw amino-acid sequence, 185 residues long: Ribosome-recycling factor (185 aa).

The protein belongs to the RRF family.

Its subcellular location is the cytoplasm. Responsible for the release of ribosomes from messenger RNA at the termination of protein biosynthesis. May increase the efficiency of translation by recycling ribosomes from one round of translation to another. This chain is Ribosome-recycling factor, found in Streptococcus pyogenes serotype M1.